The primary structure comprises 266 residues: MGAAAAEADRTLFVGNLETKVTEELLFELFHQAGPVIKVKIPKDKDGKPKQFAFVNFKHEVSVPYAMNLLNGIKLYGRPIKIQFRSGSSHAPQDVSLSYPQHHVGNSSPTSTSPSRYERTMDNMTSSAQIIQRSFSSPENFQRQAVMNSALRQMSYGGKFGSSPLDQSGFSPSVQSHSHSFNQSSSSQWRQGTPSSQRKVRMNSYPYLADRHYSREQRYTDHGSDHHYRGKRDDFFYEDRNHDDWSHDYDNRRDSSRDGKWRSSRH.

Gly-2 is subject to N-acetylglycine. The RRM domain occupies 10–87 (RTLFVGNLET…RPIKIQFRSG (78 aa)). ZCCHC8 binding regions lie at residues 25–35 (LLFELFHQAGP) and 59–76 (HEVSVPYAMNLLNGIKLY). Residues 90–115 (HAPQDVSLSYPQHHVGNSSPTSTSPS) are compositionally biased toward polar residues. The disordered stretch occupies residues 90–118 (HAPQDVSLSYPQHHVGNSSPTSTSPSRYE). Phosphoserine is present on residues Ser-136 and Ser-137. Arg-152 bears the Omega-N-methylarginine mark. A disordered region spans residues 162–266 (SSPLDQSGFS…RDGKWRSSRH (105 aa)). Over residues 173-188 (SVQSHSHSFNQSSSSQ) the composition is skewed to low complexity. At Ser-204 the chain carries Phosphoserine. Basic and acidic residues predominate over residues 209 to 266 (ADRHYSREQRYTDHGSDHHYRGKRDDFFYEDRNHDDWSHDYDNRRDSSRDGKWRSSRH).

Component of the nuclear exosome targeting (NEXT) complex composed of MTREX, ZCCHC8, and RBM7 that directs a subset of non-coding short-lived RNAs for exosomal degradation. Interacts with ZCCHC8 and SF3B2/SAP145. Binds to MTREX through ZCCHC8. Interacts with YWHAE and YWHAZ; these interactions are stress-dependent and RBM7 phosphorylation dependent; release RNA from the NEXT complex and may affect RNA targeting to the nuclear RNA exosomome for degradation. Interacts with MEPCE and LARP7, the core subunits of 7SK snRNP; upon genotoxic stress this interaction is enhanced, triggering the release of inactive P-TEFb complex from the core and P-TEFb complex activation. Post-translationally, phosphorylated at Ser-136 by MAPK14/p38-alpha-activated MAPKAPK2/MK2; this phosphorylation is stress-dependent; this phosphorylation decreases its RNA-binding capacity therefore affecting RNA nuclear exosome-mediated degradation. This phosphorylation mediates YWHAE and YWHAZ interactions. In terms of tissue distribution, ubiquitous.

It localises to the nucleus. The protein localises to the nucleoplasm. In terms of biological role, RNA-binding subunit of the trimeric nuclear exosome targeting (NEXT) complex, a complex that functions as an RNA exosome cofactor that directs a subset of non-coding short-lived RNAs for exosomal degradation. NEXT is involved in surveillance and turnover of aberrant transcripts and non-coding RNAs. Binds preferentially polyuridine sequences and associates with newly synthesized RNAs, including pre-mRNAs and short-lived exosome substrates such as promoter upstream transcripts (PROMPTs), enhancer RNAs (eRNAs), and 3'-extended products from small nuclear RNAs (snRNAs). Participates in several biological processes including DNA damage response (DDR) and stress response. During stress response, activation of the p38MAPK-MK2 pathway decreases RBM7-RNA-binding and subsequently the RNA exosome degradation activities, thereby modulating the turnover of non-coding transcriptome. Participates in DNA damage response (DDR), through its interaction with MEPCE and LARP7, the core subunits of 7SK snRNP complex, that release the positive transcription elongation factor b (P-TEFb) complex from the 7SK snRNP. In turn, activation of P-TEFb complex induces the transcription of P-TEFb-dependent DDR genes to promote cell viability. This Homo sapiens (Human) protein is RNA-binding protein 7.